The primary structure comprises 427 residues: MSAIVDIIGREILDSRGNPTVECDVLLESGTMGRAAVPSGASTGSREAIELRDGEAGRYNGKGVLKAVEHINTEISEAIMGLDASEQAFLDKTLLELDGTDNKSRLGANAMLAVSMAVAKAAAEEAGLPLYRYFGGSGAMQLPVPMMNIVNGGAHANNSLDIQEFMIVPVSQPTFREALRCGAEVFHALKKILSDRGMSTAVGDEGGFAPNFGSNDECLSTILQAIEKAGYRAGEDVLLALDCAASEFYHDGKYQLAGEGLQLSSAEFTDYLATLADKFPIVSIEDGMHESDWDGWKLLTDRLGKKVQLVGDDLFVTNTRILKEGIEKGIANSILIKINQIGTLTETFAAIEMAKRAGYTAVISHRSGETEDSTIADIAVGLNAGQIKTGSLSRSDRISKYNQLLRIEEDLGDIASYPGKSAFYNLR.

Gln-163 serves as a coordination point for (2R)-2-phosphoglycerate. Glu-205 serves as the catalytic Proton donor. Mg(2+) contacts are provided by Asp-242, Glu-285, and Asp-312. Residues Lys-337, Arg-366, Ser-367, and Lys-388 each contribute to the (2R)-2-phosphoglycerate site. Lys-337 functions as the Proton acceptor in the catalytic mechanism.

This sequence belongs to the enolase family. Mg(2+) is required as a cofactor.

Its subcellular location is the cytoplasm. It localises to the secreted. The protein localises to the cell surface. It carries out the reaction (2R)-2-phosphoglycerate = phosphoenolpyruvate + H2O. It functions in the pathway carbohydrate degradation; glycolysis; pyruvate from D-glyceraldehyde 3-phosphate: step 4/5. In terms of biological role, catalyzes the reversible conversion of 2-phosphoglycerate (2-PG) into phosphoenolpyruvate (PEP). It is essential for the degradation of carbohydrates via glycolysis. The chain is Enolase from Burkholderia orbicola (strain MC0-3).